A 383-amino-acid chain; its full sequence is S-adenosylmethionine synthase (383 aa).

Residue His15 coordinates ATP. Residue Asp17 participates in Mg(2+) binding. A K(+)-binding site is contributed by Glu43. Residues Glu56 and Gln99 each coordinate L-methionine. The segment at 99 to 109 (QSPDINQGVDR) is flexible loop. Residues 164–166 (DAK), 230–231 (RF), Asp239, 245–246 (RK), Ala262, and Lys266 contribute to the ATP site. Asp239 lines the L-methionine pocket. Lys270 contacts L-methionine.

The protein belongs to the AdoMet synthase family. Homotetramer; dimer of dimers. Requires Mg(2+) as cofactor. The cofactor is K(+).

Its subcellular location is the cytoplasm. It catalyses the reaction L-methionine + ATP + H2O = S-adenosyl-L-methionine + phosphate + diphosphate. It participates in amino-acid biosynthesis; S-adenosyl-L-methionine biosynthesis; S-adenosyl-L-methionine from L-methionine: step 1/1. Catalyzes the formation of S-adenosylmethionine (AdoMet) from methionine and ATP. The overall synthetic reaction is composed of two sequential steps, AdoMet formation and the subsequent tripolyphosphate hydrolysis which occurs prior to release of AdoMet from the enzyme. The sequence is that of S-adenosylmethionine synthase from Shewanella sp. (strain W3-18-1).